A 771-amino-acid chain; its full sequence is Probable glycosyltransferase STELLO1 (771 aa).

The tract at residues 1–23 (MLVQDRAAPSPAKPPKSQIRELP) is disordered. The Cytoplasmic portion of the chain corresponds to 1-50 (MLVQDRAAPSPAKPPKSQIRELPTHQQIRRRFSEPKNLDFSTWFSENLSR). A helical membrane pass occupies residues 51 to 71 (IAVFSLLIVTIVAFFFLYNTT). Topologically, residues 72 to 771 (DTASLLCFQS…EGDPLLMELV (700 aa)) are lumenal. Residues asparagine 242 and asparagine 729 are each glycosylated (N-linked (GlcNAc...) asparagine).

The protein belongs to the STELLO family. Homo- and heterodimer with STL2. Interacts with CESA1, CESA3, CESA4, CESA6, CESA7 and CESA8, but not with GOT1. As to expression, expressed in cells that are expanding or producing secondary cell walls.

The protein resides in the golgi apparatus membrane. Probable glycosyltransferase regulating the assembly and trafficking of cellulose synthase complexes. The protein is Probable glycosyltransferase STELLO1 of Arabidopsis thaliana (Mouse-ear cress).